We begin with the raw amino-acid sequence, 171 residues long: uncharacterized protein (171 aa).

This is an uncharacterized protein from Mycoplasma genitalium (strain ATCC 33530 / DSM 19775 / NCTC 10195 / G37) (Mycoplasmoides genitalium).